Here is a 629-residue protein sequence, read N- to C-terminus: tRNA uridine 5-carboxymethylaminomethyl modification enzyme MnmG (629 aa).

FAD-binding positions include 13 to 18 (GGGHAG), V125, and S180. 273-287 (GPRYCPSIEDKIHRF) contributes to the NAD(+) binding site. Q370 provides a ligand contact to FAD.

It belongs to the MnmG family. In terms of assembly, homodimer. Heterotetramer of two MnmE and two MnmG subunits. Requires FAD as cofactor.

It is found in the cytoplasm. Its function is as follows. NAD-binding protein involved in the addition of a carboxymethylaminomethyl (cmnm) group at the wobble position (U34) of certain tRNAs, forming tRNA-cmnm(5)s(2)U34. In Shewanella sp. (strain MR-7), this protein is tRNA uridine 5-carboxymethylaminomethyl modification enzyme MnmG.